The sequence spans 205 residues: Large ribosomal subunit protein uL4 (205 aa).

Residues 56–78 form a disordered region; sequence ISGTTAKPYRQKHTGRARQGSLR.

It belongs to the universal ribosomal protein uL4 family. Part of the 50S ribosomal subunit.

Its function is as follows. One of the primary rRNA binding proteins, this protein initially binds near the 5'-end of the 23S rRNA. It is important during the early stages of 50S assembly. It makes multiple contacts with different domains of the 23S rRNA in the assembled 50S subunit and ribosome. Forms part of the polypeptide exit tunnel. The polypeptide is Large ribosomal subunit protein uL4 (Ehrlichia canis (strain Jake)).